Reading from the N-terminus, the 227-residue chain is Cytochrome c oxidase subunit 2 (227 aa).

The Mitochondrial intermembrane portion of the chain corresponds to 1 to 14 (MAYPFELGFQDATS). Residues 15–45 (PIMEELLHFHDHTLMIVFLISSLVLYIISLM) form a helical membrane-spanning segment. The Mitochondrial matrix portion of the chain corresponds to 46–59 (LTTKLTHTSTMDAQ). The chain crosses the membrane as a helical span at residues 60–87 (EIETIWTILPAIILILIALPSLRILYMM). Topologically, residues 88-227 (DEINDPSLTV…HFENWSSSML (140 aa)) are mitochondrial intermembrane. The Cu cation site is built by H161, C196, E198, C200, H204, and M207. E198 is a binding site for Mg(2+).

This sequence belongs to the cytochrome c oxidase subunit 2 family. Component of the cytochrome c oxidase (complex IV, CIV), a multisubunit enzyme composed of 14 subunits. The complex is composed of a catalytic core of 3 subunits MT-CO1, MT-CO2 and MT-CO3, encoded in the mitochondrial DNA, and 11 supernumerary subunits COX4I, COX5A, COX5B, COX6A, COX6B, COX6C, COX7A, COX7B, COX7C, COX8 and NDUFA4, which are encoded in the nuclear genome. The complex exists as a monomer or a dimer and forms supercomplexes (SCs) in the inner mitochondrial membrane with NADH-ubiquinone oxidoreductase (complex I, CI) and ubiquinol-cytochrome c oxidoreductase (cytochrome b-c1 complex, complex III, CIII), resulting in different assemblies (supercomplex SCI(1)III(2)IV(1) and megacomplex MCI(2)III(2)IV(2)). Found in a complex with TMEM177, COA6, COX18, COX20, SCO1 and SCO2. Interacts with TMEM177 in a COX20-dependent manner. Interacts with COX20. Interacts with COX16. The cofactor is Cu cation.

Its subcellular location is the mitochondrion inner membrane. The enzyme catalyses 4 Fe(II)-[cytochrome c] + O2 + 8 H(+)(in) = 4 Fe(III)-[cytochrome c] + 2 H2O + 4 H(+)(out). Its function is as follows. Component of the cytochrome c oxidase, the last enzyme in the mitochondrial electron transport chain which drives oxidative phosphorylation. The respiratory chain contains 3 multisubunit complexes succinate dehydrogenase (complex II, CII), ubiquinol-cytochrome c oxidoreductase (cytochrome b-c1 complex, complex III, CIII) and cytochrome c oxidase (complex IV, CIV), that cooperate to transfer electrons derived from NADH and succinate to molecular oxygen, creating an electrochemical gradient over the inner membrane that drives transmembrane transport and the ATP synthase. Cytochrome c oxidase is the component of the respiratory chain that catalyzes the reduction of oxygen to water. Electrons originating from reduced cytochrome c in the intermembrane space (IMS) are transferred via the dinuclear copper A center (CU(A)) of subunit 2 and heme A of subunit 1 to the active site in subunit 1, a binuclear center (BNC) formed by heme A3 and copper B (CU(B)). The BNC reduces molecular oxygen to 2 water molecules using 4 electrons from cytochrome c in the IMS and 4 protons from the mitochondrial matrix. The protein is Cytochrome c oxidase subunit 2 (MT-CO2) of Tamias townsendii (Townsend's chipmunk).